A 406-amino-acid chain; its full sequence is Renin (406 aa).

A signal peptide spans 1–23; sequence MDGWRRMPRWGLLLLLWGSCTFG. The propeptide at 24-66 is activation peptide; that stretch reads LPTDTTTFKRIFLKRMPSIRESLKERGVDMARLGPEWSQPMKR. A glycan (N-linked (GlcNAc...) asparagine) is linked at Asn-71. The Peptidase A1 domain maps to 86-403; it reads YYGEIGIGTP…DRRNNRIGFA (318 aa). Residue Asp-104 is part of the active site. Cysteines 117 and 124 form a disulfide. A glycan (N-linked (GlcNAc...) asparagine) is linked at Asn-141. A disulfide bridge links Cys-283 with Cys-287. The active site involves Asp-292. Cys-325 and Cys-362 are oxidised to a cystine.

This sequence belongs to the peptidase A1 family. In terms of assembly, interacts with ATP6AP2.

The protein resides in the secreted. It is found in the membrane. It carries out the reaction Cleavage of Leu-|-Xaa bond in angiotensinogen to generate angiotensin I.. With respect to regulation, interaction with ATP6AP2 results in a 5-fold increased efficiency in angiotensinogen processing. Its function is as follows. Renin is a highly specific endopeptidase, whose only known function is to generate angiotensin I from angiotensinogen in the plasma, initiating a cascade of reactions that produce an elevation of blood pressure and increased sodium retention by the kidney. This chain is Renin (REN), found in Macaca mulatta (Rhesus macaque).